The sequence spans 401 residues: Phosphoglycerate kinase (401 aa).

Substrate-binding positions include 24–26, arginine 40, 63–66, arginine 122, and arginine 155; these read DFN and HFGR. ATP contacts are provided by residues lysine 206, glycine 297, glutamate 328, and 357 to 360; that span reads GGDS.

It belongs to the phosphoglycerate kinase family. In terms of assembly, monomer.

The protein resides in the cytoplasm. The enzyme catalyses (2R)-3-phosphoglycerate + ATP = (2R)-3-phospho-glyceroyl phosphate + ADP. The protein operates within carbohydrate degradation; glycolysis; pyruvate from D-glyceraldehyde 3-phosphate: step 2/5. This is Phosphoglycerate kinase from Synechococcus sp. (strain CC9605).